We begin with the raw amino-acid sequence, 279 residues long: Tryptophan 2,3-dioxygenase (279 aa).

Substrate contacts are provided by residues 48–52 (FIVIH), Tyr110, and Arg114. Heme is bound at residue His237. Position 251 (Thr251) interacts with substrate.

This sequence belongs to the tryptophan 2,3-dioxygenase family. Homotetramer. It depends on heme as a cofactor.

It catalyses the reaction L-tryptophan + O2 = N-formyl-L-kynurenine. Its pathway is amino-acid degradation; L-tryptophan degradation via kynurenine pathway; L-kynurenine from L-tryptophan: step 1/2. Its function is as follows. Heme-dependent dioxygenase that catalyzes the oxidative cleavage of the L-tryptophan (L-Trp) pyrrole ring and converts L-tryptophan to N-formyl-L-kynurenine. Catalyzes the oxidative cleavage of the indole moiety. This is Tryptophan 2,3-dioxygenase from Bacillus anthracis.